The following is a 257-amino-acid chain: L-aspartate dehydrogenase (257 aa).

2 residues coordinate NAD(+): Ala-124 and Asn-180. Residue His-208 is part of the active site.

Belongs to the L-aspartate dehydrogenase family.

The catalysed reaction is L-aspartate + NADP(+) + H2O = oxaloacetate + NH4(+) + NADPH + H(+). It carries out the reaction L-aspartate + NAD(+) + H2O = oxaloacetate + NH4(+) + NADH + H(+). Its pathway is cofactor biosynthesis; NAD(+) biosynthesis; iminoaspartate from L-aspartate (dehydrogenase route): step 1/1. Functionally, specifically catalyzes the NAD or NADP-dependent dehydrogenation of L-aspartate to iminoaspartate. In Methanothermobacter thermautotrophicus (strain ATCC 29096 / DSM 1053 / JCM 10044 / NBRC 100330 / Delta H) (Methanobacterium thermoautotrophicum), this protein is L-aspartate dehydrogenase.